We begin with the raw amino-acid sequence, 168 residues long: Ribosome maturation factor RimP (168 aa).

This sequence belongs to the RimP family.

The protein localises to the cytoplasm. Required for maturation of 30S ribosomal subunits. This Syntrophobacter fumaroxidans (strain DSM 10017 / MPOB) protein is Ribosome maturation factor RimP.